The sequence spans 343 residues: Aspartate carbamoyltransferase catalytic subunit (343 aa).

The carbamoyl phosphate site is built by R91 and T92. L-aspartate is bound at residue K119. Carbamoyl phosphate-binding residues include R141, H171, and Q174. R204 and R259 together coordinate L-aspartate. Carbamoyl phosphate-binding residues include G300 and P301.

Belongs to the aspartate/ornithine carbamoyltransferase superfamily. ATCase family. In terms of assembly, heterododecamer (2C3:3R2) of six catalytic PyrB chains organized as two trimers (C3), and six regulatory PyrI chains organized as three dimers (R2).

The enzyme catalyses carbamoyl phosphate + L-aspartate = N-carbamoyl-L-aspartate + phosphate + H(+). It functions in the pathway pyrimidine metabolism; UMP biosynthesis via de novo pathway; (S)-dihydroorotate from bicarbonate: step 2/3. Functionally, catalyzes the condensation of carbamoyl phosphate and aspartate to form carbamoyl aspartate and inorganic phosphate, the committed step in the de novo pyrimidine nucleotide biosynthesis pathway. This chain is Aspartate carbamoyltransferase catalytic subunit, found in Burkholderia ambifaria (strain MC40-6).